The following is a 158-amino-acid chain: 6,7-dimethyl-8-ribityllumazine synthase (158 aa).

5-amino-6-(D-ribitylamino)uracil-binding positions include Phe22, 57–59 (AVE), and 81–83 (AVI). Residue 86–87 (GT) participates in (2S)-2-hydroxy-3-oxobutyl phosphate binding. The active-site Proton donor is His89. Residue Phe114 coordinates 5-amino-6-(D-ribitylamino)uracil. A (2S)-2-hydroxy-3-oxobutyl phosphate-binding site is contributed by Arg128.

Belongs to the DMRL synthase family. As to quaternary structure, forms an icosahedral capsid composed of 60 subunits, arranged as a dodecamer of pentamers.

The catalysed reaction is (2S)-2-hydroxy-3-oxobutyl phosphate + 5-amino-6-(D-ribitylamino)uracil = 6,7-dimethyl-8-(1-D-ribityl)lumazine + phosphate + 2 H2O + H(+). The protein operates within cofactor biosynthesis; riboflavin biosynthesis; riboflavin from 2-hydroxy-3-oxobutyl phosphate and 5-amino-6-(D-ribitylamino)uracil: step 1/2. Functionally, catalyzes the formation of 6,7-dimethyl-8-ribityllumazine by condensation of 5-amino-6-(D-ribitylamino)uracil with 3,4-dihydroxy-2-butanone 4-phosphate. This is the penultimate step in the biosynthesis of riboflavin. The protein is 6,7-dimethyl-8-ribityllumazine synthase of Shewanella pealeana (strain ATCC 700345 / ANG-SQ1).